The chain runs to 307 residues: UDP-3-O-acyl-N-acetylglucosamine deacetylase (307 aa).

His78, His241, and Asp245 together coordinate Zn(2+). The active-site Proton donor is His268.

It belongs to the LpxC family. Zn(2+) serves as cofactor.

It catalyses the reaction a UDP-3-O-[(3R)-3-hydroxyacyl]-N-acetyl-alpha-D-glucosamine + H2O = a UDP-3-O-[(3R)-3-hydroxyacyl]-alpha-D-glucosamine + acetate. The protein operates within glycolipid biosynthesis; lipid IV(A) biosynthesis; lipid IV(A) from (3R)-3-hydroxytetradecanoyl-[acyl-carrier-protein] and UDP-N-acetyl-alpha-D-glucosamine: step 2/6. Its function is as follows. Catalyzes the hydrolysis of UDP-3-O-myristoyl-N-acetylglucosamine to form UDP-3-O-myristoylglucosamine and acetate, the committed step in lipid A biosynthesis. The sequence is that of UDP-3-O-acyl-N-acetylglucosamine deacetylase from Paracidovorax citrulli (strain AAC00-1) (Acidovorax citrulli).